The following is a 220-amino-acid chain: Ribose-5-phosphate isomerase A (220 aa).

Substrate is bound by residues 25–28 (TGST), 80–83 (DGAD), and 93–96 (KGGG). Residue glutamate 102 is the Proton acceptor of the active site. Residue lysine 120 participates in substrate binding.

Belongs to the ribose 5-phosphate isomerase family. In terms of assembly, homodimer.

The catalysed reaction is aldehydo-D-ribose 5-phosphate = D-ribulose 5-phosphate. It functions in the pathway carbohydrate degradation; pentose phosphate pathway; D-ribose 5-phosphate from D-ribulose 5-phosphate (non-oxidative stage): step 1/1. Catalyzes the reversible conversion of ribose-5-phosphate to ribulose 5-phosphate. This chain is Ribose-5-phosphate isomerase A, found in Bacillus cereus (strain ATCC 14579 / DSM 31 / CCUG 7414 / JCM 2152 / NBRC 15305 / NCIMB 9373 / NCTC 2599 / NRRL B-3711).